The following is a 185-amino-acid chain: MSRLLEESLKTCPIVKRGEYHYFIHPISDGVPLVKPELLRDVSTRVIKMIDTDIDKIVTAEAMGIPIVTAVSIATDIPYVIMRKREYLLEGEIPVHQETGYSKGELYLNGINKGDKVVILDDVISTGGTLVAIINALKRAGADIKDVLCIIDRGNGQNVVEEKTGYKVKTLVKIEVVDGKVQILE.

The protein belongs to the purine/pyrimidine phosphoribosyltransferase family. Archaeal HPRT subfamily. As to quaternary structure, homodimer.

The protein localises to the cytoplasm. The catalysed reaction is IMP + diphosphate = hypoxanthine + 5-phospho-alpha-D-ribose 1-diphosphate. It carries out the reaction GMP + diphosphate = guanine + 5-phospho-alpha-D-ribose 1-diphosphate. It functions in the pathway purine metabolism; IMP biosynthesis via salvage pathway; IMP from hypoxanthine: step 1/1. Its function is as follows. Catalyzes a salvage reaction resulting in the formation of IMP that is energically less costly than de novo synthesis. This chain is Hypoxanthine/guanine phosphoribosyltransferase, found in Methanococcus maripaludis (strain C7 / ATCC BAA-1331).